A 465-amino-acid polypeptide reads, in one-letter code: Pre-mRNA-splicing factor URN1 (465 aa).

In terms of domain architecture, WW spans 1-32; sequence MRGEWQEFKTPAGKKYYYNKNTKQSRWEKPNL. Disordered regions lie at residues 28–49, 144–198, and 266–288; these read EKPN…QTER, ERKD…VNQD, and ERSG…DSEV. Position 150 is a phosphoserine (serine 150). Positions 160-175 are enriched in polar residues; sequence LQESHTGLVSGYGSSS. Over residues 176–192 the composition is skewed to acidic residues; that stretch reads GEEDEEEDEEEDEENEE. An FF domain is found at 212-266; the sequence is DIDERNIFFELFDRYKLDKFSTWSLQSKKIENDPDFYKIRDDTVRESLFEEWCGE. Positions 274-288 are enriched in acidic residues; the sequence is EESDSEDNSEDDSEV.

Component of the precatalytic spliceosomal complex B. Interacts with PRP19.

The protein localises to the nucleus. In terms of biological role, component of the spliceosome involved in mRNA processing. This chain is Pre-mRNA-splicing factor URN1 (URN1), found in Saccharomyces cerevisiae (strain ATCC 204508 / S288c) (Baker's yeast).